A 125-amino-acid chain; its full sequence is Large ribosomal subunit protein uL22 (125 aa).

It belongs to the universal ribosomal protein uL22 family. Part of the 50S ribosomal subunit.

This protein binds specifically to 23S rRNA; its binding is stimulated by other ribosomal proteins, e.g. L4, L17, and L20. It is important during the early stages of 50S assembly. It makes multiple contacts with different domains of the 23S rRNA in the assembled 50S subunit and ribosome. Its function is as follows. The globular domain of the protein is located near the polypeptide exit tunnel on the outside of the subunit, while an extended beta-hairpin is found that lines the wall of the exit tunnel in the center of the 70S ribosome. This Erythrobacter litoralis (strain HTCC2594) protein is Large ribosomal subunit protein uL22.